A 497-amino-acid polypeptide reads, in one-letter code: 3-octaprenyl-4-hydroxybenzoate carboxy-lyase (497 aa).

Asparagine 175 is a Mn(2+) binding site. Residues 178–180 (IYR), 192–194 (RWL), and 197–198 (RG) contribute to the prenylated FMN site. Glutamate 241 contacts Mn(2+). Aspartate 290 serves as the catalytic Proton donor.

It belongs to the UbiD family. Homohexamer. The cofactor is prenylated FMN. It depends on Mn(2+) as a cofactor.

It is found in the cell membrane. It catalyses the reaction a 4-hydroxy-3-(all-trans-polyprenyl)benzoate + H(+) = a 2-(all-trans-polyprenyl)phenol + CO2. It participates in cofactor biosynthesis; ubiquinone biosynthesis. Catalyzes the decarboxylation of 3-octaprenyl-4-hydroxy benzoate to 2-octaprenylphenol, an intermediate step in ubiquinone biosynthesis. The protein is 3-octaprenyl-4-hydroxybenzoate carboxy-lyase of Escherichia coli O157:H7.